A 152-amino-acid chain; its full sequence is MEKKLSSEKNQLSSEHILGLLPHRYPFALVDKVIENIPGERAVAVKNVTLNEPQFQGHFPERPLMPGVLIVESMAQVGGIIVTQMPDLPKGLFVFAGINNVKFRKPVVPGDQLIISCELLSIKRQRFGKVKGEAYVDGNLVCAGELMFSLVD.

Residue H58 is part of the active site.

The protein belongs to the thioester dehydratase family. FabZ subfamily.

It is found in the cytoplasm. The catalysed reaction is a (3R)-hydroxyacyl-[ACP] = a (2E)-enoyl-[ACP] + H2O. Functionally, involved in unsaturated fatty acids biosynthesis. Catalyzes the dehydration of short chain beta-hydroxyacyl-ACPs and long chain saturated and unsaturated beta-hydroxyacyl-ACPs. This chain is 3-hydroxyacyl-[acyl-carrier-protein] dehydratase FabZ, found in Prochlorococcus marinus (strain MIT 9301).